The primary structure comprises 299 residues: Large ribosomal subunit protein uL29m (299 aa).

This sequence belongs to the universal ribosomal protein uL29 family. Component of the mitochondrial large ribosomal subunit. Mature mitochondrial ribosomes consist of a small (37S) and a large (54S) subunit. The 37S subunit contains at least 33 different proteins and 1 molecule of RNA (15S). The 54S subunit contains at least 45 different proteins and 1 molecule of RNA (21S).

The protein resides in the mitochondrion. The sequence is that of Large ribosomal subunit protein uL29m (MRPL4) from Scheffersomyces stipitis (strain ATCC 58785 / CBS 6054 / NBRC 10063 / NRRL Y-11545) (Yeast).